Consider the following 187-residue polypeptide: Protein Flattop (187 aa).

The interval 97 to 187 is disordered; the sequence is THSGHGIHTH…TPQLEREEPQ (91 aa). Polar residues predominate over residues 122 to 131; that stretch reads EGDQTCNAPT. Over residues 169–187 the composition is skewed to basic and acidic residues; that stretch reads KRREQSLEETPQLEREEPQ.

Belongs to the Flattop family.

The protein resides in the cytoplasm. It localises to the cytoskeleton. It is found in the cilium basal body. Its subcellular location is the cell projection. The protein localises to the cilium. The protein resides in the apical cell membrane. It localises to the cilium axoneme. Its function is as follows. Microtubule inner protein (MIP) part of the dynein-decorated doublet microtubules (DMTs) in cilia axoneme. Acts as a regulator of cilium basal body docking and positioning in mono- and multiciliated cells. Regulates basal body docking and cilia formation in multiciliated lung cells. Regulates kinocilium positioning and stereocilia bundle morphogenesis in the inner ear. In Salmo salar (Atlantic salmon), this protein is Protein Flattop.